A 530-amino-acid chain; its full sequence is Sensor protein kinase PilS (530 aa).

A run of 6 helical transmembrane segments spans residues 25 to 37, 57 to 70, 76 to 98, 101 to 119, 124 to 144, and 156 to 174; these read LTIG…LISS, WCYL…ALFL, LLPI…YAGG, PSGI…NILL, GLVI…FLSL, and AGGL…QALV. The Cytoplasmic segment spans residues 175–530; sequence RRQEQTETLA…ITFAHPRKLS (356 aa). A PAS domain is found at 196 to 260; that stretch reads ELNALILQRM…KQWRLNPSLR (65 aa). Positions 316-527 constitute a Histidine kinase domain; sequence GIAHEIRNPL…CFRITFAHPR (212 aa). Position 319 is a phosphohistidine; by autocatalysis (H319).

In terms of assembly, interacts with PilA.

The protein localises to the cell inner membrane. The catalysed reaction is ATP + protein L-histidine = ADP + protein N-phospho-L-histidine.. Member of the two-component regulatory system PilS/PilR that regulates the expression of multiple genes including the type IV pilus (T4P) major subunit PilA. Thereby, plays a major role in the regulation of multiple motility pathways. Functions as a membrane-associated protein kinase that phosphorylates PilR in response to environmental signals leading to activation of specific gene promoters including the pilin gene. The protein is Sensor protein kinase PilS (pilS) of Pseudomonas aeruginosa (strain ATCC 15692 / DSM 22644 / CIP 104116 / JCM 14847 / LMG 12228 / 1C / PRS 101 / PAO1).